The sequence spans 387 residues: Krueppel-like factor 17 (387 aa).

3 disordered regions span residues F28 to V54, S213 to S234, and R257 to S277. A compositionally biased stretch (polar residues) spans D30–R46. Positions R257–S270 are enriched in basic and acidic residues. 3 C2H2-type zinc fingers span residues Y280–H304, Y310–H334, and H340–H362. The tract at residues Q357–L387 is disordered.

Belongs to the Sp1 C2H2-type zinc-finger protein family.

It is found in the nucleus. Functionally, transcription repressor that binds to the promoter of target genes and prevents their expression. Acts as a negative regulator of epithelial-mesenchymal transition and metastasis in breast cancer. Specifically binds the 5'-CACCC-3' sequence in the promoter of ID1, a key metastasis regulator in breast cancer, and repress its expression. May be a germ cell-specific transcription factor that plays important roles in spermatid differentiation and oocyte development. The protein is Krueppel-like factor 17 (KLF17) of Sus scrofa (Pig).